The primary structure comprises 54 residues: Protein hunchback (54 aa).

C2H2-type zinc fingers lie at residues 1–3, 9–31, and 37–54; these read RKH, FQCD…RKFH, and YRCA…SFKL.

Belongs to the hunchback C2H2-type zinc-finger protein family.

The protein resides in the nucleus. Functionally, gap class segmentation protein that controls development of head structures. This is Protein hunchback (hb) from Calliphora vicina (Blue blowfly).